Consider the following 219-residue polypeptide: ATP-dependent Clp protease proteolytic subunit 1, mitochondrial (219 aa).

The N-terminal 23 residues, 1-23, are a transit peptide targeting the mitochondrion; sequence MLRRILTTSSVRNLTSSTQARVG. The active-site Nucleophile is the S118. H143 is a catalytic residue.

It belongs to the peptidase S14 family. In terms of assembly, tetradecamer that assembles into a two heptameric rings with a central cavity.

It localises to the mitochondrion matrix. It carries out the reaction Hydrolysis of proteins to small peptides in the presence of ATP and magnesium. alpha-casein is the usual test substrate. In the absence of ATP, only oligopeptides shorter than five residues are hydrolyzed (such as succinyl-Leu-Tyr-|-NHMec, and Leu-Tyr-Leu-|-Tyr-Trp, in which cleavage of the -Tyr-|-Leu- and -Tyr-|-Trp bonds also occurs).. Clp cleaves peptides in various proteins in a process that requires ATP hydrolysis. Clp may be responsible for a fairly general and central housekeeping function rather than for the degradation of specific substrates. In Caenorhabditis briggsae, this protein is ATP-dependent Clp protease proteolytic subunit 1, mitochondrial.